We begin with the raw amino-acid sequence, 906 residues long: Catenin alpha-2 (906 aa).

Over residues 866-880 (KKPLVKREKPEEYQT) the composition is skewed to basic and acidic residues. The tract at residues 866-892 (KKPLVKREKPEEYQTRVRRGSQKKHIS) is disordered. Residues 881–891 (RVRRGSQKKHI) show a composition bias toward basic residues.

This sequence belongs to the vinculin/alpha-catenin family. In terms of assembly, interacts with CDH1 and CDH2. Mainly in the nervous system (at protein level).

The protein localises to the cell membrane. It is found in the cytoplasm. It localises to the cytoskeleton. Its subcellular location is the cell junction. The protein resides in the adherens junction. The protein localises to the cell projection. It is found in the axon. It localises to the nucleus. May function as a linker between cadherin adhesion receptors and the cytoskeleton to regulate cell-cell adhesion and differentiation in the nervous system. The sequence is that of Catenin alpha-2 (CTNNA2) from Gallus gallus (Chicken).